Consider the following 116-residue polypeptide: Dynein light chain Tctex-type 3 (116 aa).

Tyr4 is subject to 3'-nitrotyrosine.

The protein belongs to the dynein light chain Tctex-type family. In terms of assembly, homodimer. The cytoplasmic dynein 1 complex consists of two catalytic heavy chains (HCs) and a number of non-catalytic subunits presented by intermediate chains (ICs), light intermediate chains (LICs) and light chains (LCs); the composition seems to vary in respect to the IC, LIC and LC composition. The heavy chain homodimer serves as a scaffold for the probable homodimeric assembly of the respective non-catalytic subunits. The ICs and LICs bind directly to the HC dimer and the LCs assemble on the IC dimer. DYNLT1 and DYNLT3 compete for association with dynein IC (DYNC1I1 or DYNC1I2). Self-associates. Interacts with DYNC1I1 and DYNC1I2. Interacts with BUB3. Interacts with SATB1 in nucleus to form complex with matrix attachment regions (MARs) of DNA.

It localises to the nucleus. It is found in the cytoplasm. The protein resides in the cytoskeleton. Its subcellular location is the chromosome. The protein localises to the centromere. It localises to the kinetochore. Functionally, acts as one of several non-catalytic accessory components of the cytoplasmic dynein 1 complex that are thought to be involved in linking dynein to cargos and to adapter proteins that regulate dynein function. Cytoplasmic dynein 1 acts as a motor for the intracellular retrograde motility of vesicles and organelles along microtubules. Probably binds BUB3 as part of transport cargo. Required for the efficient progression through mitosis. This Mus musculus (Mouse) protein is Dynein light chain Tctex-type 3 (Dynlt3).